The chain runs to 664 residues: Lysophospholipase 1 (664 aa).

The signal sequence occupies residues 1–22 (MKLQSLLVSAAVLTSLTENVNA). N-linked (GlcNAc...) asparagine glycosylation is found at N26, N33, N52, N78, N92, N123, N160, N170, N215, N277, N307, N345, N388, N459, N489, N513, N541, N565, and N582. Positions 35–586 (TCDDDINLVR…TNYCWNGTID (552 aa)) constitute a PLA2c domain. Residue N634 is the site of GPI-anchor amidated asparagine attachment. Positions 635-664 (AGNALVNYSNLNTNTFIGVLSVISAVFGLI) are cleaved as a propeptide — removed in mature form.

It belongs to the lysophospholipase family.

It is found in the cell membrane. It catalyses the reaction a 1-acyl-sn-glycero-3-phosphocholine + H2O = sn-glycerol 3-phosphocholine + a fatty acid + H(+). The catalysed reaction is a 1-acyl-sn-glycero-3-phospho-(1D-myo-inositol) + H2O = sn-glycero-3-phospho-1D-myo-inositol + a fatty acid + H(+). The enzyme catalyses a 1-acyl-sn-glycero-3-phospho-L-serine + H2O = sn-glycero-3-phospho-L-serine + a fatty acid + H(+). It carries out the reaction a 1,2-diacyl-sn-glycero-3-phospho-(1D-myo-inositol) + 2 H2O = sn-glycero-3-phospho-1D-myo-inositol + 2 a carboxylate + 2 H(+). It catalyses the reaction a 1,2-diacyl-sn-glycero-3-phospho-L-serine + 2 H2O = sn-glycero-3-phospho-L-serine + 2 a carboxylate + 2 H(+). The catalysed reaction is 2 1-hexadecanoyl-sn-glycero-3-phosphocholine = 1,2-dihexadecanoyl-sn-glycero-3-phosphocholine + sn-glycerol 3-phosphocholine. The enzyme catalyses 1-hexadecanoyl-sn-glycero-3-phosphocholine + H2O = sn-glycerol 3-phosphocholine + hexadecanoate + H(+). It carries out the reaction 1,2-dihexadecanoyl-sn-glycero-3-phosphocholine + H2O = 1-hexadecanoyl-sn-glycero-3-phosphocholine + hexadecanoate + H(+). Sequentially removes both fatty acyl groups from diacylglycerophospholipids and therefore has both phospholipase B and lysophospholipase activities. It also displays transacylase activity. Substrate preference is phosphatidylserine &gt; phosphatidylinositol &gt;&gt; phosphatidylcholine &gt; phosphatidylethanolamine. The substrate specificity is pH- and ion-dependent. In contrast with activities observed at optimum pH 3.5, the order of substrate preference at pH 5.5 is phosphatidylcholine = phosphatidylethanolamine &gt;&gt; phosphatidylinositol. Degrades predominantly phosphatidylcholine and to some extent phosphatidylinositol in vivo. The chain is Lysophospholipase 1 from Saccharomyces cerevisiae (strain ATCC 204508 / S288c) (Baker's yeast).